The sequence spans 411 residues: Carbohydrate sulfotransferase 1 (411 aa).

Residues 1-2 are Cytoplasmic-facing; the sequence is MQ. Residues 3–23 traverse the membrane as a helical; Signal-anchor for type II membrane protein segment; it reads CSWKAVLLLALASIAIQYTAI. Residues 24–411 lie on the Lumenal side of the membrane; it reads RTFTAKSFHT…VEERDFRPFL (388 aa). A glycan (N-linked (GlcNAc...) asparagine) is linked at asparagine 56. 69–75 contacts 3'-phosphoadenylyl sulfate; the sequence is TRSGSSF. Asparagine 145 and asparagine 189 each carry an N-linked (GlcNAc...) asparagine glycan. Residue 234–242 participates in 3'-phosphoadenylyl sulfate binding; the sequence is RDPRGILAS. The N-linked (GlcNAc...) asparagine glycan is linked to asparagine 334. A Cell attachment site motif is present at residues 337-339; sequence RGD.

It belongs to the sulfotransferase 1 family. Gal/GlcNAc/GalNAc subfamily. Broadly expressed with highest levels in central nervous system. Expressed in cortex (at protein level). Expressed in high endothelial venules in peripheral lymph nodes, mesenteric lymph nodes and Peyer's patches.

It localises to the golgi apparatus membrane. The enzyme catalyses 3'-phosphoadenylyl sulfate + keratan = adenosine 3',5'-bisphosphate + keratan 6'-sulfate.. The protein operates within glycan metabolism. Functionally, sulfotransferase that utilizes 3'-phospho-5'-adenylyl sulfate (PAPS) as sulfonate donor to catalyze the transfer of sulfate to position 6 of internal galactose (Gal) residues of keratan. Cooperates with B4GALT4 and B3GNT7 glycosyltransferases and CHST6 sulfotransferase to construct and elongate disulfated disaccharide unit [-&gt;3(6-sulfoGalbeta)1-&gt;4(6-sulfoGlcNAcbeta)1-&gt;] within keratan sulfate polymer. Has a preference for sulfating keratan sulfate, but it also transfers sulfate to the unsulfated polymer. Involved in biosynthesis of phosphacan, a major keratan sulfate proteoglycan in the developing brain. Involved in biosynthesis of 6-sulfoGalbeta-containing O-linked glycans in high endothelial venules of lymph nodes. May act in a synergistic manner with CHST4 to generate sialyl 6',6-disulfo Lewis X motif, a recognition determinant for immune cell receptors implicated in leukocyte trafficking. Catalyzes sulfation of N-acetyllactosamine (LacNAc) oligosaccharides with highest efficiency for sialylated LacNAc structures. The sequence is that of Carbohydrate sulfotransferase 1 (Chst1) from Mus musculus (Mouse).